Consider the following 239-residue polypeptide: Transcriptional regulatory protein DcuR (239 aa).

One can recognise a Response regulatory domain in the interval 3–121; that stretch reads NVLIIDDDAM…RFEEALTGWR (119 aa). 4-aspartylphosphate is present on D56. The segment at residues 181-200 is a DNA-binding region (H-T-H motif); the sequence is TDELANEVNISRVSCRKYLI.

In terms of processing, phosphorylated and activated by DcuS.

It localises to the cytoplasm. Member of the two-component regulatory system DcuR/DcuS. Involved in the C4-dicarboxylate-stimulated regulation of the genes encoding the anaerobic fumarate respiratory system (frdABCD; nuoAN; dcuB; dcuC; sdhCDAB; etc.). Weakly regulates the aerobic C4-dicarboxylate transporter dctA. The chain is Transcriptional regulatory protein DcuR (dcuR) from Shigella flexneri.